A 326-amino-acid chain; its full sequence is Chitinase 12 (326 aa).

A signal peptide spans 1–21 (MRALAVVAMVATAFLAAAVHA). Residues 22–62 (EQCGSQAGGAVCPNCLCCSQFGWCGSTSDYCGAGCQSQCSA) form the Chitin-binding type-1 domain. 8 disulfides stabilise this stretch: Cys24/Cys39, Cys33/Cys45, Cys36/Cys65, Cys38/Cys52, Cys56/Cys60, Cys102/Cys165, Cys179/Cys187, and Cys286/Cys318. Residue Glu147 is the Proton donor of the active site.

The protein belongs to the glycosyl hydrolase 19 family. Chitinase class I subfamily. As to expression, expressed in meristems and at lower levels in roots and sheaths.

The enzyme catalyses Random endo-hydrolysis of N-acetyl-beta-D-glucosaminide (1-&gt;4)-beta-linkages in chitin and chitodextrins.. Hydrolyzes chitin and plays a role in defense against fungal pathogens containing chitin. Its overexpression confers enhanced resistance to sheath blight pathogen (R.solani). This is Chitinase 12 (Cht12) from Oryza sativa subsp. japonica (Rice).